A 529-amino-acid chain; its full sequence is V-set and immunoglobulin domain-containing protein 10 (529 aa).

The first 18 residues, 1-18 (MMITSAVVLYLLLLSHQT), serve as a signal peptide directing secretion. 2 consecutive Ig-like C2-type domains span residues 19 to 110 (VSEE…QTLS) and 129 to 217 (PATF…QELL). Residues 21–411 (EEQVQQFVIG…LNVKTSAGNG (391 aa)) are Extracellular-facing. N-linked (GlcNAc...) asparagine glycans are attached at residues N34, N35, N46, N135, N147, N159, N211, N269, N280, N284, N330, N357, and N376. An intrachain disulfide couples C40 to C96. C150 and C199 are oxidised to a cystine. Positions 317 to 403 (PTGQPLATAL…GARELEVYLN (87 aa)) constitute an Ig-like C2-type 3 domain. Cysteines 335 and 387 form a disulfide. The chain crosses the membrane as a helical span at residues 412–432 (GAIVGIFVSVLVMMIGIVVGV). Residues 433 to 529 (TVYTKRDRIC…PQRAELQPAV (97 aa)) lie on the Cytoplasmic side of the membrane.

Its subcellular location is the membrane. This chain is V-set and immunoglobulin domain-containing protein 10 (vsig10), found in Danio rerio (Zebrafish).